A 194-amino-acid polypeptide reads, in one-letter code: Orotate phosphoribosyltransferase (194 aa).

5-phospho-alpha-D-ribose 1-diphosphate is bound by residues Arg-102, Lys-103, Lys-106, His-108, and 129–137; that span reads EDVVTTGGS. The orotate site is built by Thr-133 and Arg-161.

It belongs to the purine/pyrimidine phosphoribosyltransferase family. PyrE subfamily. In terms of assembly, homodimer. The cofactor is Mg(2+).

The catalysed reaction is orotidine 5'-phosphate + diphosphate = orotate + 5-phospho-alpha-D-ribose 1-diphosphate. Its pathway is pyrimidine metabolism; UMP biosynthesis via de novo pathway; UMP from orotate: step 1/2. Catalyzes the transfer of a ribosyl phosphate group from 5-phosphoribose 1-diphosphate to orotate, leading to the formation of orotidine monophosphate (OMP). In Prochlorococcus marinus (strain MIT 9211), this protein is Orotate phosphoribosyltransferase.